A 462-amino-acid chain; its full sequence is MSDNITDLEPTAERPNVRKVFVKTYGCQMNVYDSQRMADSLAAEGYVATDTPDDADLVLLNTCHIREKASEKLYSALGRLRKMKDAREANGKELTIGVAGCVAQAEGQEILRRAPNVDLVIGPQTYHRLPNALARVRSGEKVVETEYALEDKFEHLPSPKREETRKRGVSAFLTVQEGCDKFCTFCVVPYTRGSEVSRSVKQIVAEAERLADSGVRELTLLGQNVNAWHGAGDDGREWGLGELLFRLARIPGIARLRYTTSHPRDMDDSLIAAHRDLRQLMPYLHLPVQSGSDRILKAMNRRHKADEYVRLIERIREVRPDLALSGDFIVGFPGETDQDFEDTMRLVRDVNYAQAYSFKYSPRPGTPGADLDDHVEEAVKDERLQRLQALLSEQQYAFQDSMIGREMDVLLEKPGRVAGQMVGRSPWLLPVIIDDSNDRVGDIIHVKITSTGTNSLIAQKLA.

The 121-residue stretch at 18-138 (RKVFVKTYGC…LPNALARVRS (121 aa)) folds into the MTTase N-terminal domain. Residues C27, C63, C101, C179, C183, and C186 each contribute to the [4Fe-4S] cluster site. Residues 165–397 (RKRGVSAFLT…QALLSEQQYA (233 aa)) enclose the Radical SAM core domain. In terms of domain architecture, TRAM spans 400 to 462 (DSMIGREMDV…TNSLIAQKLA (63 aa)).

This sequence belongs to the methylthiotransferase family. MiaB subfamily. As to quaternary structure, monomer. It depends on [4Fe-4S] cluster as a cofactor.

It is found in the cytoplasm. The enzyme catalyses N(6)-dimethylallyladenosine(37) in tRNA + (sulfur carrier)-SH + AH2 + 2 S-adenosyl-L-methionine = 2-methylsulfanyl-N(6)-dimethylallyladenosine(37) in tRNA + (sulfur carrier)-H + 5'-deoxyadenosine + L-methionine + A + S-adenosyl-L-homocysteine + 2 H(+). In terms of biological role, catalyzes the methylthiolation of N6-(dimethylallyl)adenosine (i(6)A), leading to the formation of 2-methylthio-N6-(dimethylallyl)adenosine (ms(2)i(6)A) at position 37 in tRNAs that read codons beginning with uridine. In Brucella anthropi (strain ATCC 49188 / DSM 6882 / CCUG 24695 / JCM 21032 / LMG 3331 / NBRC 15819 / NCTC 12168 / Alc 37) (Ochrobactrum anthropi), this protein is tRNA-2-methylthio-N(6)-dimethylallyladenosine synthase.